A 441-amino-acid polypeptide reads, in one-letter code: Arginine biosynthesis bifunctional protein ArgJ, mitochondrial (441 aa).

A mitochondrion-targeting transit peptide spans 1–8; the sequence is MRISSTLL. Threonine 177, lysine 204, threonine 215, glutamate 301, asparagine 436, and serine 441 together coordinate substrate. The active-site Nucleophile is threonine 215.

Belongs to the ArgJ family. In terms of assembly, heterodimer of an alpha and a beta chain. Post-translationally, the alpha and beta chains are autoproteolytically processed from a single precursor protein within the mitochondrion.

It is found in the mitochondrion matrix. It catalyses the reaction N(2)-acetyl-L-ornithine + L-glutamate = N-acetyl-L-glutamate + L-ornithine. The catalysed reaction is L-glutamate + acetyl-CoA = N-acetyl-L-glutamate + CoA + H(+). Its pathway is amino-acid biosynthesis; L-arginine biosynthesis; L-ornithine and N-acetyl-L-glutamate from L-glutamate and N(2)-acetyl-L-ornithine (cyclic): step 1/1. It participates in amino-acid biosynthesis; L-arginine biosynthesis; N(2)-acetyl-L-ornithine from L-glutamate: step 1/4. Its function is as follows. Catalyzes two activities which are involved in the cyclic version of arginine biosynthesis: the synthesis of acetylglutamate from glutamate and acetyl-CoA, and of ornithine by transacetylation between acetylornithine and glutamate. This Saccharomyces cerevisiae (strain Lalvin EC1118 / Prise de mousse) (Baker's yeast) protein is Arginine biosynthesis bifunctional protein ArgJ, mitochondrial.